The sequence spans 353 residues: Photosystem II protein D1 (353 aa).

An N-acetylthreonine modification is found at Thr2. Thr2 is modified (phosphothreonine). 3 helical membrane passes run Tyr29–Ser46, His118–Leu133, and Trp142–Ala156. Chlorophyll a is bound at residue His118. Tyr126 is a binding site for pheophytin a. Residues Asp170 and Glu189 each coordinate [CaMn4O5] cluster. The chain crosses the membrane as a helical span at residues Phe197–Leu218. His198 lines the chlorophyll a pocket. A quinone is bound by residues His215 and Ser264–Phe265. His215 contributes to the Fe cation binding site. His272 is a binding site for Fe cation. Residues Phe274–Leu288 form a helical membrane-spanning segment. The [CaMn4O5] cluster site is built by His332, Glu333, Asp342, and Ala344. A propeptide spanning residues Ala345–Gly353 is cleaved from the precursor.

This sequence belongs to the reaction center PufL/M/PsbA/D family. PSII is composed of 1 copy each of membrane proteins PsbA, PsbB, PsbC, PsbD, PsbE, PsbF, PsbH, PsbI, PsbJ, PsbK, PsbL, PsbM, PsbT, PsbX, PsbY, PsbZ, Psb30/Ycf12, at least 3 peripheral proteins of the oxygen-evolving complex and a large number of cofactors. It forms dimeric complexes. It depends on The D1/D2 heterodimer binds P680, chlorophylls that are the primary electron donor of PSII, and subsequent electron acceptors. It shares a non-heme iron and each subunit binds pheophytin, quinone, additional chlorophylls, carotenoids and lipids. D1 provides most of the ligands for the Mn4-Ca-O5 cluster of the oxygen-evolving complex (OEC). There is also a Cl(-1) ion associated with D1 and D2, which is required for oxygen evolution. The PSII complex binds additional chlorophylls, carotenoids and specific lipids. as a cofactor. Post-translationally, tyr-161 forms a radical intermediate that is referred to as redox-active TyrZ, YZ or Y-Z. C-terminally processed by CTPA; processing is essential to allow assembly of the oxygen-evolving complex and thus photosynthetic growth.

It localises to the plastid. The protein localises to the chloroplast thylakoid membrane. It carries out the reaction 2 a plastoquinone + 4 hnu + 2 H2O = 2 a plastoquinol + O2. Photosystem II (PSII) is a light-driven water:plastoquinone oxidoreductase that uses light energy to abstract electrons from H(2)O, generating O(2) and a proton gradient subsequently used for ATP formation. It consists of a core antenna complex that captures photons, and an electron transfer chain that converts photonic excitation into a charge separation. The D1/D2 (PsbA/PsbD) reaction center heterodimer binds P680, the primary electron donor of PSII as well as several subsequent electron acceptors. This chain is Photosystem II protein D1, found in Petunia hybrida (Petunia).